Reading from the N-terminus, the 48-residue chain is Entericidin B (48 aa).

The N-terminal stretch at 1–21 (MVKKTIAAIFSVLVLSTVLTA) is a signal peptide. A lipid anchor (N-palmitoyl cysteine) is attached at Cys22. Cys22 is lipidated: S-diacylglycerol cysteine.

Belongs to the EcnA/EcnB lipoprotein family.

The protein resides in the cell membrane. Its function is as follows. Plays a role in the bacteriolysis. Is activated under conditions of high osmolarity by the factor sigma S. Entericidin A functions as an antidote. The protein is Entericidin B (ecnB) of Escherichia coli O157:H7.